Consider the following 251-residue polypeptide: Hydroxyacylglutathione hydrolase (251 aa).

Zn(2+) is bound by residues histidine 53, histidine 55, aspartate 57, histidine 58, histidine 110, aspartate 127, and histidine 165.

It belongs to the metallo-beta-lactamase superfamily. Glyoxalase II family. In terms of assembly, monomer. Zn(2+) is required as a cofactor.

The catalysed reaction is an S-(2-hydroxyacyl)glutathione + H2O = a 2-hydroxy carboxylate + glutathione + H(+). It participates in secondary metabolite metabolism; methylglyoxal degradation; (R)-lactate from methylglyoxal: step 2/2. Its function is as follows. Thiolesterase that catalyzes the hydrolysis of S-D-lactoyl-glutathione to form glutathione and D-lactic acid. This Blochmanniella pennsylvanica (strain BPEN) protein is Hydroxyacylglutathione hydrolase.